Here is a 182-residue protein sequence, read N- to C-terminus: Ribosome-recycling factor (182 aa).

It belongs to the RRF family.

It localises to the cytoplasm. Its function is as follows. Responsible for the release of ribosomes from messenger RNA at the termination of protein biosynthesis. May increase the efficiency of translation by recycling ribosomes from one round of translation to another. This is Ribosome-recycling factor from Synechococcus sp. (strain WH7803).